The chain runs to 935 residues: C-1-tetrahydrofolate synthase, cytoplasmic (935 aa).

Met1 carries the N-acetylmethionine modification. Positions 2–291 are methylenetetrahydrofolate dehydrogenase and methenyltetrahydrofolate cyclohydrolase (D/C) domain; sequence APAEILNGRE…MLMQSTVESA (290 aa). Substrate contacts are provided by residues 52–56 and 99–101; these read YINVK and VQL. Lys56 is a catalytic residue. Residues 172–174 and Ser197 contribute to the NADP(+) site; that span reads GRS. 272–276 serves as a coordination point for substrate; that stretch reads PGGVG. Positions 310–935 are formyltetrahydrofolate synthetase domain; sequence LNLKTPDPSD…PETQQVNGLF (626 aa). Ser318 bears the Phosphoserine mark. 380-387 is a binding site for ATP; the sequence is TPLGEGKS. A phosphoserine mark is found at Ser413 and Ser490.

In the N-terminal section; belongs to the tetrahydrofolate dehydrogenase/cyclohydrolase family. This sequence in the C-terminal section; belongs to the formate--tetrahydrofolate ligase family. In terms of assembly, homodimer.

It is found in the cytoplasm. The enzyme catalyses (6R)-5,10-methylene-5,6,7,8-tetrahydrofolate + NADP(+) = (6R)-5,10-methenyltetrahydrofolate + NADPH. The catalysed reaction is (6R)-5,10-methenyltetrahydrofolate + H2O = (6R)-10-formyltetrahydrofolate + H(+). It carries out the reaction (6S)-5,6,7,8-tetrahydrofolate + formate + ATP = (6R)-10-formyltetrahydrofolate + ADP + phosphate. It participates in one-carbon metabolism; tetrahydrofolate interconversion. Functionally, trifunctional enzyme that catalyzes the interconversion of three forms of one-carbon-substituted tetrahydrofolate: (6R)-5,10-methylene-5,6,7,8-tetrahydrofolate, 5,10-methenyltetrahydrofolate and (6S)-10-formyltetrahydrofolate. These derivatives of tetrahydrofolate are differentially required in nucleotide and amino acid biosynthesis, (6S)-10-formyltetrahydrofolate being required for purine biosynthesis while (6R)-5,10-methylene-5,6,7,8-tetrahydrofolate is used for serine and methionine biosynthesis for instance. The chain is C-1-tetrahydrofolate synthase, cytoplasmic (MTHFD1) from Pongo abelii (Sumatran orangutan).